A 236-amino-acid polypeptide reads, in one-letter code: Proteasome subunit alpha (236 aa).

It belongs to the peptidase T1A family. The 20S proteasome core is composed of 14 alpha and 14 beta subunits that assemble into four stacked heptameric rings, resulting in a barrel-shaped structure. The two inner rings, each composed of seven catalytic beta subunits, are sandwiched by two outer rings, each composed of seven alpha subunits. The catalytic chamber with the active sites is on the inside of the barrel. Has a gated structure, the ends of the cylinder being occluded by the N-termini of the alpha-subunits. Is capped by the proteasome-associated ATPase, ARC.

It is found in the cytoplasm. It functions in the pathway protein degradation; proteasomal Pup-dependent pathway. Its activity is regulated as follows. The formation of the proteasomal ATPase ARC-20S proteasome complex, likely via the docking of the C-termini of ARC into the intersubunit pockets in the alpha-rings, may trigger opening of the gate for substrate entry. Interconversion between the open-gate and close-gate conformations leads to a dynamic regulation of the 20S proteasome proteolysis activity. Component of the proteasome core, a large protease complex with broad specificity involved in protein degradation. The polypeptide is Proteasome subunit alpha (Pseudarthrobacter chlorophenolicus (strain ATCC 700700 / DSM 12829 / CIP 107037 / JCM 12360 / KCTC 9906 / NCIMB 13794 / A6) (Arthrobacter chlorophenolicus)).